The sequence spans 321 residues: Manganese-dependent ADP-ribose/CDP-alcohol diphosphatase (321 aa).

Positions 25, 27, 72, 107, 226, 263, and 265 each coordinate Zn(2+).

The protein belongs to the ADPRibase-Mn family. As to quaternary structure, monomer. The cofactor is Mg(2+).

The catalysed reaction is CDP-choline + H2O = phosphocholine + CMP + 2 H(+). The enzyme catalyses ADP-D-ribose + H2O = D-ribose 5-phosphate + AMP + 2 H(+). It carries out the reaction CDP-glycerol + H2O = sn-glycerol 3-phosphate + CMP + 2 H(+). In terms of biological role, hydrolyzes ADP-ribose, IDP-ribose, CDP-glycerol, CDP-choline and CDP-ethanolamine, but not other non-reducing ADP-sugars or CDP-glucose. This chain is Manganese-dependent ADP-ribose/CDP-alcohol diphosphatase, found in Oryza sativa subsp. japonica (Rice).